The sequence spans 253 residues: Probable transcriptional regulatory protein RC0681 (253 aa).

Residues 1 to 21 (MAGHSKFKNIQHRKGAQDKKR) are disordered.

It belongs to the TACO1 family.

Its subcellular location is the cytoplasm. This chain is Probable transcriptional regulatory protein RC0681, found in Rickettsia conorii (strain ATCC VR-613 / Malish 7).